Here is a 258-residue protein sequence, read N- to C-terminus: UPF0246 protein Shew_1093 (258 aa).

This sequence belongs to the UPF0246 family.

This is UPF0246 protein Shew_1093 from Shewanella loihica (strain ATCC BAA-1088 / PV-4).